The chain runs to 858 residues: Ubiquitin carboxyl-terminal hydrolase 5 (858 aa).

Residue A2 is modified to N-acetylalanine. Residues 74–96 (RRTRRPKEEDPTTGTGDPPRKKP) are disordered. A Glycyl lysine isopeptide (Lys-Gly) (interchain with G-Cter in SUMO) cross-link involves residue K113. S149 and S156 each carry phosphoserine. The UBP-type; degenerate zinc finger occupies 175 to 283 (QVSKHAFSLK…EHLSHFGIDM (109 aa)). C195 and C816 are oxidised to a cystine. Zn(2+) is bound by residues C199 and C202. Residue W209 coordinates substrate. C219 contributes to the Zn(2+) binding site. Position 221-224 (221-224 (RRYF)) interacts with substrate. H232 lines the Zn(2+) pocket. Residues Y259, Y261, and D264 each contribute to the substrate site. The residue at position 292 (T292) is a Phosphothreonine. The USP domain maps to 326–856 (TGIRNLGNSC…LGYIYFYQRV (531 aa)). The Nucleophile role is filled by C335. T623 is subject to Phosphothreonine. UBA domains follow at residues 654–695 (MLDE…VMSH) and 722–762 (PPPE…IFSH). A phosphoserine mark is found at S779, S783, and S785. H818 serves as the catalytic Proton acceptor.

This sequence belongs to the peptidase C19 family. Homodimer. Interacts with TRIML1. Post-translationally, ubiquitinated by SMURF1; leading to proteasomal degradation. SUMOylated at Lys-113; SUMOylation affects the interaction with Cav3.2 channels.

Its subcellular location is the cytoplasm. The protein localises to the stress granule. It is found in the nucleus. It carries out the reaction Thiol-dependent hydrolysis of ester, thioester, amide, peptide and isopeptide bonds formed by the C-terminal Gly of ubiquitin (a 76-residue protein attached to proteins as an intracellular targeting signal).. Functionally, deubiquitinating enzyme that participates in a wide range of cellular processes by specifically cleaving isopeptide bonds between ubiquitin and substrate proteins or ubiquitin itself. Affects thereby important cellular signaling pathways such as NF-kappa-B, Wnt/beta-catenin, and cytokine production by regulating ubiquitin-dependent protein degradation. Participates in the activation of the Wnt signaling pathway by promoting FOXM1 deubiquitination and stabilization that induces the recruitment of beta-catenin to Wnt target gene promoter. Regulates the assembly and disassembly of heat-induced stress granules by mediating the hydrolysis of unanchored ubiquitin chains. Promotes lipopolysaccharide-induced apoptosis and inflammatory response by stabilizing the TXNIP protein. Affects T-cell biology by stabilizing the inhibitory receptor on T-cells PDC1. Acts as a negative regulator of autophagy by regulating ULK1 at both protein and mRNA levels. Acts also as a negative regulator of type I interferon production by simultaneously removing both 'Lys-48'-linked unanchored and 'Lys-63'-linked anchored polyubiquitin chains on the transcription factor IRF3. Modulates the stability of DNA mismatch repair protein MLH1 and counteracts the effect of the ubiquitin ligase UBR4. Upon activation by insulin, it gets phosphorylated through mTORC1-mediated phosphorylation to enhance YTHDF1 stability by removing 'Lys-11'-linked polyubiquitination. May also deubiquitinate other substrates such as the calcium channel CACNA1H. In Pongo abelii (Sumatran orangutan), this protein is Ubiquitin carboxyl-terminal hydrolase 5 (UBP5).